A 230-amino-acid polypeptide reads, in one-letter code: Nicotinamide riboside kinase 2 (230 aa).

An ATP-binding site is contributed by 9–17; sequence GMTNGGKTT. Residues T16 and D35 each contribute to the Mg(2+) site. D35 serves as the catalytic Proton acceptor. Substrate contacts are provided by residues 35–38 and 54–55; these read DDFF and WD. ATP is bound at residue R130. Substrate contacts are provided by residues R131 and 136–137; that span reads YT. ATP contacts are provided by residues 134–136 and 174–176; these read RNY and KSR. The interval 191-230 is disordered; it reads LLNRSQESAPSPARPARTQGPGRGCGHRTARPAASQQDSM.

Belongs to the uridine kinase family. NRK subfamily. As to quaternary structure, monomer. Interacts with ITGB1 alone or when associated with alpha-7, but not with alpha-5. As to expression, predominantly expressed in skeletal muscle and, at a much lower level, in the heart (at protein level). No expression in brain, kidney, liver, lung, pancreas nor placenta.

The catalysed reaction is beta-nicotinamide D-riboside + ATP = beta-nicotinamide D-ribonucleotide + ADP + H(+). The enzyme catalyses beta-D-ribosylnicotinate + ATP = nicotinate beta-D-ribonucleotide + ADP + H(+). The protein operates within cofactor biosynthesis; NAD(+) biosynthesis. Catalyzes the phosphorylation of nicotinamide riboside (NR) and nicotinic acid riboside (NaR) to form nicotinamide mononucleotide (NMN) and nicotinic acid mononucleotide (NaMN). Reduces laminin matrix deposition and cell adhesion to laminin, but not to fibronectin. Involved in the regulation of PXN at the protein level and of PXN tyrosine phosphorylation. May play a role in the regulation of terminal myogenesis. This chain is Nicotinamide riboside kinase 2 (NMRK2), found in Homo sapiens (Human).